The following is a 397-amino-acid chain: Elongation factor Tu (397 aa).

Residues 10–206 enclose the tr-type G domain; that stretch reads KPHVNIGTIG…AVDTAIPEPE (197 aa). The interval 19–26 is G1; it reads GHIDHGKT. 19 to 26 contributes to the GTP binding site; it reads GHIDHGKT. Position 26 (Thr26) interacts with Mg(2+). Positions 62–66 are G2; the sequence is GITIS. Residues 83 to 86 form a G3 region; it reads DCPG. GTP-binding positions include 83–87 and 138–141; these read DCPGH and NKAD. The segment at 138 to 141 is G4; sequence NKAD. The G5 stretch occupies residues 176–178; it reads SAL.

The protein belongs to the TRAFAC class translation factor GTPase superfamily. Classic translation factor GTPase family. EF-Tu/EF-1A subfamily. In terms of assembly, monomer.

Its subcellular location is the cytoplasm. The catalysed reaction is GTP + H2O = GDP + phosphate + H(+). GTP hydrolase that promotes the GTP-dependent binding of aminoacyl-tRNA to the A-site of ribosomes during protein biosynthesis. The polypeptide is Elongation factor Tu (Kineococcus radiotolerans (strain ATCC BAA-149 / DSM 14245 / SRS30216)).